The primary structure comprises 675 residues: Serine/threonine-protein kinase ATG1 (675 aa).

The Protein kinase domain maps to 25–328; the sequence is FVIGGEIGKG…FEDFFNDPVV (304 aa). ATP is bound by residues 31–39 and Lys54; that span reads IGKGSFAQV. Asp168 functions as the Proton acceptor in the catalytic mechanism. Over residues 339 to 374 the composition is skewed to basic and acidic residues; that stretch reads DIPKVEQKPSRDLRSLEADPQREQSELAKSPRERPL. 2 disordered regions span residues 339 to 455 and 501 to 577; these read DIPK…ERKL and RLTS…TTRS. Polar residues-rich tracts occupy residues 390-399, 516-538, and 556-565; these read ANVSARTGQS, ATQQ…SAVQ, and ASRSLNTSSA.

This sequence belongs to the protein kinase superfamily. Ser/Thr protein kinase family. APG1/unc-51/ULK1 subfamily. As to quaternary structure, homodimer. Forms a ternary complex with ATG13 and ATG17.

Its subcellular location is the cytoplasm. It localises to the preautophagosomal structure membrane. It catalyses the reaction L-seryl-[protein] + ATP = O-phospho-L-seryl-[protein] + ADP + H(+). The catalysed reaction is L-threonyl-[protein] + ATP = O-phospho-L-threonyl-[protein] + ADP + H(+). Functionally, serine/threonine protein kinase involved in the cytoplasm to vacuole transport (Cvt) and found to be essential in autophagy, where it is required for the formation of autophagosomes. Involved in the clearance of protein aggregates which cannot be efficiently cleared by the proteasome. Required for selective autophagic degradation of the nucleus (nucleophagy) as well as for mitophagy which contributes to regulate mitochondrial quantity and quality by eliminating the mitochondria to a basal level to fulfill cellular energy requirements and preventing excess ROS production. Also involved in endoplasmic reticulum-specific autophagic process, in selective removal of ER-associated degradation (ERAD) substrates. Plays a key role in ATG9 and ATG23 cycling through the pre-autophagosomal structure and is necessary to promote ATG18 binding to ATG9 through phosphorylation of ATG9. Catalyzes phosphorylation of ATG4, decreasing the interaction between ATG4 and ATG8 and impairing deconjugation of PE-conjugated forms of ATG8. The sequence is that of Serine/threonine-protein kinase ATG1 from Colletotrichum lindemuthianum (Bean anthracnose fungus).